Reading from the N-terminus, the 96-residue chain is Putative septation protein SpoVG (96 aa).

It belongs to the SpoVG family.

Its function is as follows. Could be involved in septation. The chain is Putative septation protein SpoVG from Phytoplasma australiense.